The chain runs to 307 residues: UDP-N-acetylenolpyruvoylglucosamine reductase (307 aa).

Residues 33 to 198 (KVGGPADIFV…LNATFALQKG (166 aa)) form the FAD-binding PCMH-type domain. Arg177 is an active-site residue. Catalysis depends on Ser227, which acts as the Proton donor. Glu297 is a catalytic residue.

The protein belongs to the MurB family. It depends on FAD as a cofactor.

It localises to the cytoplasm. The catalysed reaction is UDP-N-acetyl-alpha-D-muramate + NADP(+) = UDP-N-acetyl-3-O-(1-carboxyvinyl)-alpha-D-glucosamine + NADPH + H(+). It participates in cell wall biogenesis; peptidoglycan biosynthesis. Its function is as follows. Cell wall formation. This Clostridium novyi (strain NT) protein is UDP-N-acetylenolpyruvoylglucosamine reductase.